The primary structure comprises 876 residues: Probable LRR receptor-like protein kinase At1g51890 (876 aa).

An N-terminal signal peptide occupies residues 1–19 (MRFLSFLIFVFAVLGLVQA). Over 20–500 (QDQSGFISLD…TGKNSTNVVA (481 aa)) the chain is Extracellular. Asn45, Asn90, Asn138, Asn177, Asn251, Asn259, Asn284, Asn290, Asn327, Asn335, Asn397, Asn412, and Asn417 each carry an N-linked (GlcNAc...) asparagine glycan. LRR repeat units follow at residues 407 to 430 (QIIS…SKLT), 431 to 453 (HLRE…FSDM), and 455 to 476 (NLTL…ETLQ). N-linked (GlcNAc...) asparagine glycans are attached at residues Asn455, Asn460, Asn468, Asn481, and Asn494. The helical transmembrane segment at 501-521 (IAASVASVFAVLVILAIVFVV) threads the bilayer. Over 522-872 (IRKKQRTNEA…FSPSSASDFS (351 aa)) the chain is Cytoplasmic. Phosphothreonine is present on Thr561. In terms of domain architecture, Protein kinase spans 570–842 (KNFERVLGKG…HVVMELNECL (273 aa)). ATP is bound by residues 576-584 (LGKGGFGTV) and Lys597. At Tyr642 the chain carries Phosphotyrosine. Residue Asp694 is the Proton acceptor of the active site. Phosphothreonine is present on residues Thr729 and Thr734. Tyr742 carries the phosphotyrosine modification.

It belongs to the protein kinase superfamily. Ser/Thr protein kinase family.

It is found in the cell membrane. The catalysed reaction is L-seryl-[protein] + ATP = O-phospho-L-seryl-[protein] + ADP + H(+). The enzyme catalyses L-threonyl-[protein] + ATP = O-phospho-L-threonyl-[protein] + ADP + H(+). The sequence is that of Probable LRR receptor-like protein kinase At1g51890 from Arabidopsis thaliana (Mouse-ear cress).